Reading from the N-terminus, the 271-residue chain is 4,5-DOPA dioxygenase extradiol (271 aa).

Residues H22, H57, H177, and H234 each contribute to the Zn(2+) site.

This sequence belongs to the DODA-type extradiol aromatic ring-opening dioxygenase family. As to quaternary structure, monomer. Zn(2+) is required as a cofactor.

It is found in the cytoplasm. The catalysed reaction is L-dopa + O2 = 4-(L-alanin-3-yl)-2-hydroxy-cis,cis-muconate 6-semialdehyde + H(+). Its function is as follows. In vitro, opens the cyclic ring of dihydroxy-phenylalanine (DOPA) between carbons 4 and 5, thus producing an unstable seco-DOPA that rearranges nonenzymatically to betalamic acid. The physiological substrate is unknown. The sequence is that of 4,5-DOPA dioxygenase extradiol (ygiD) from Escherichia coli (strain K12).